A 107-amino-acid polypeptide reads, in one-letter code: Small ribosomal subunit protein eS25 (107 aa).

Positions 1–35 are disordered; it reads MPPKQQLSKAAKAAAAMAGGKKSKKKWSKKSHKDK. A compositionally biased stretch (low complexity) spans 8 to 20; the sequence is SKAAKAAAAMAGG. Residues 21 to 35 are compositionally biased toward basic residues; sequence KKSKKKWSKKSHKDK.

This sequence belongs to the eukaryotic ribosomal protein eS25 family.

The protein is Small ribosomal subunit protein eS25 (RPS25) of Candida glabrata (strain ATCC 2001 / BCRC 20586 / JCM 3761 / NBRC 0622 / NRRL Y-65 / CBS 138) (Yeast).